Here is a 390-residue protein sequence, read N- to C-terminus: Phosphopentomutase (390 aa).

6 residues coordinate Mn(2+): D9, D283, H288, D324, H325, and H336.

Belongs to the phosphopentomutase family. It depends on Mn(2+) as a cofactor.

It is found in the cytoplasm. The enzyme catalyses 2-deoxy-alpha-D-ribose 1-phosphate = 2-deoxy-D-ribose 5-phosphate. It carries out the reaction alpha-D-ribose 1-phosphate = D-ribose 5-phosphate. It participates in carbohydrate degradation; 2-deoxy-D-ribose 1-phosphate degradation; D-glyceraldehyde 3-phosphate and acetaldehyde from 2-deoxy-alpha-D-ribose 1-phosphate: step 1/2. Isomerase that catalyzes the conversion of deoxy-ribose 1-phosphate (dRib-1-P) and ribose 1-phosphate (Rib-1-P) to deoxy-ribose 5-phosphate (dRib-5-P) and ribose 5-phosphate (Rib-5-P), respectively. In Thermotoga petrophila (strain ATCC BAA-488 / DSM 13995 / JCM 10881 / RKU-1), this protein is Phosphopentomutase.